Here is a 312-residue protein sequence, read N- to C-terminus: Pimeloyl-[acyl-carrier protein] methyl ester esterase (312 aa).

The AB hydrolase-1 domain occupies 17–241 (VYLIHGWGAN…KAAHAPFLSH (225 aa)). Residues Trp-23, 83–84 (SL), and 145–149 (FLQLQ) each bind substrate. Catalysis depends on Ser-83, which acts as the Nucleophile. Active-site residues include Asp-207 and His-235. His-235 contacts substrate.

This sequence belongs to the AB hydrolase superfamily. Carboxylesterase BioH family. In terms of assembly, monomer.

The protein resides in the cytoplasm. It catalyses the reaction 6-carboxyhexanoyl-[ACP] methyl ester + H2O = 6-carboxyhexanoyl-[ACP] + methanol + H(+). It functions in the pathway cofactor biosynthesis; biotin biosynthesis. In terms of biological role, the physiological role of BioH is to remove the methyl group introduced by BioC when the pimeloyl moiety is complete. It allows to synthesize pimeloyl-ACP via the fatty acid synthetic pathway through the hydrolysis of the ester bonds of pimeloyl-ACP esters. In Neisseria meningitidis serogroup A / serotype 4A (strain DSM 15465 / Z2491), this protein is Pimeloyl-[acyl-carrier protein] methyl ester esterase.